Here is a 245-residue protein sequence, read N- to C-terminus: Dehydrogenase/reductase SDR family member 6 (245 aa).

Residues 16-18, Asp37, and Asp58 contribute to the NAD(+) site; that span reads QGI. Arg144 is a substrate binding site. Tyr147 functions as the Proton acceptor in the catalytic mechanism. Residues Lys151 and 180 to 184 contribute to the NAD(+) site; that span reads VDTPS. Substrate contacts are provided by Arg188 and Arg205.

This sequence belongs to the short-chain dehydrogenases/reductases (SDR) family. In terms of assembly, homotetramer.

It localises to the cytoplasm. The catalysed reaction is cis-4-hydroxy-L-proline + NAD(+) = 4-oxo-L-proline + NADH + H(+). It carries out the reaction (R)-3-hydroxybutanoate + NAD(+) = acetoacetate + NADH + H(+). It participates in amino-acid metabolism. It functions in the pathway siderophore biosynthesis. Its function is as follows. NAD(H)-dependent dehydrogenase/reductase with a preference for cyclic substrates. Catalyzes stereoselective conversion of 4-oxo-L-proline to cis-4-hydroxy-L-proline, likely a detoxification mechanism for ketoprolines. Mediates the formation of 2,5-dihydroxybenzoate (2,5-DHBA), a siderophore that chelates free cytoplasmic iron, thereby regulating iron transport and homeostasis while protecting cells against free radical-induced oxidative stress. The iron-siderophore complex is imported into mitochondria, providing an iron source for mitochondrial metabolic processes in particular heme synthesis. May act as a 3-hydroxybutyrate dehydrogenase. This Aquarana catesbeiana (American bullfrog) protein is Dehydrogenase/reductase SDR family member 6 (bdh2).